Reading from the N-terminus, the 387-residue chain is MKIRAALALSATASGVLAAVVPQQALLNNPQIHHENEKYLIELAPYQTRWVTEEEKWALKLDGVNFIDITEERNPGFYPTLHQASNVRYPTKMEHVEEVVGLTHRLTKANMERDLEKFTSFHTRYYKSQTGIESATWLYNQVQTVIEQSGAAEHGATVDRFAHSWGQFSIIARIPGKSNKTVVLGAHQDSINLFLPSILAAPGADDDGSGTVTILEALRGLLQSDTVAQGKAPNTIEFHWYSAEEGGMLGSQAIFSQYKQERRDIKAMLQQDMTGYVQGALNAGRKEAVGIMIDYVDRGLTQFLKDVVTAYCNVGYLETKCGYACSDHTSASKYGYPSAMATEAEMENTNKRIHTTDDRIKYLSFDHMLEHAKLTLGFAYELAFASF.

A signal peptide spans 1–18 (MKIRAALALSATASGVLA). Residues 19-87 (AVVPQQALLN…YPTLHQASNV (69 aa)) constitute a propeptide that is removed on maturation. A glycan (N-linked (GlcNAc...) asparagine) is linked at Asn179. Residues His187, Asp206, Glu245, and Asp272 each contribute to the Zn(2+) site. Cys321 and Cys325 are joined by a disulfide. His354 is a binding site for Zn(2+).

Belongs to the peptidase M28 family. M28E subfamily. Monomer. Requires Zn(2+) as cofactor.

It localises to the secreted. Functionally, extracellular aminopeptidase that allows assimilation of proteinaceous substrates. This chain is Leucine aminopeptidase 1 (lap1), found in Aspergillus oryzae (strain ATCC 42149 / RIB 40) (Yellow koji mold).